A 585-amino-acid polypeptide reads, in one-letter code: MITGNIIKIAGPVIIGDGMRGTQIHEMVRVGDIGLIGEIIELEGDTATVQVYEETAGIKPGEKIESTGGPLSVELGPGILKSIYDGIQRPLDEIKSVSGDFIPRGIDVPALDKVKEWEFKPTASVGDKVNGGDIIGTVDETSAIVHKIMIPPKMSGTIKSIVSQGKYNVTEDIAEVETENGIETVQMMQVWPVRVGRPYTNKLDPDVPLITGQRAQDTFFCVAKGGTSAMPGPFGSGKTVTQQQLAKWADADIVVYIGCGERGNEMTEVLTEFPELEDPKTGNPLMDRTVLIANTSNMPVAAREACVYTGITIAEYFRDMGYDVALMADSTSRWAEAMRELSGRLEEMPGEEGYPAYLASRLAQFYERAGRVTTIGSHKAEASVTVVGAVSPPGGDLSEPVTQNTLRIAKVFWALDASLADRRHFPSINWLNSYSLYVDSITNWWNSQIGSDWRDLRNTAMALLQKESELNEIVQLVGPDALPQKDRVTLESARMLREDFLQQNAFDDTDTYCSPSKQYNMLKTILLYNTTAQSALADGADINKLVNLDVRVDLGKMKYIPEDEFEAKVEDIRNRITKECNEAGQ.

232 to 239 provides a ligand contact to ATP; the sequence is GPFGSGKT.

Belongs to the ATPase alpha/beta chains family. In terms of assembly, has multiple subunits with at least A(3), B(3), C, D, E, F, H, I and proteolipid K(x).

It is found in the cell membrane. It catalyses the reaction ATP + H2O + 4 H(+)(in) = ADP + phosphate + 5 H(+)(out). Functionally, component of the A-type ATP synthase that produces ATP from ADP in the presence of a proton gradient across the membrane. The A chain is the catalytic subunit. This chain is A-type ATP synthase subunit A, found in Methanosphaera stadtmanae (strain ATCC 43021 / DSM 3091 / JCM 11832 / MCB-3).